A 276-amino-acid chain; its full sequence is Rhomboid protease GlpG (276 aa).

6 consecutive transmembrane segments (helical) span residues 94 to 114 (GPVT…MSLI), 142 to 162 (IFMH…WYLG), 169 to 189 (LGSG…GYVQ), 192 to 212 (FSGP…GYVW), 229 to 249 (LIIF…GMSM), and 250 to 270 (ANGA…VDTL). Ser201 (nucleophile) is an active-site residue. His254 is an active-site residue.

Belongs to the peptidase S54 family.

Its subcellular location is the cell inner membrane. It catalyses the reaction Cleaves type-1 transmembrane domains using a catalytic dyad composed of serine and histidine that are contributed by different transmembrane domains.. Rhomboid-type serine protease that catalyzes intramembrane proteolysis. This is Rhomboid protease GlpG from Salmonella dublin (strain CT_02021853).